Reading from the N-terminus, the 745-residue chain is Bacteriophage N4 adsorption protein B (745 aa).

Transmembrane regions (helical) follow at residues 8-28 (FATW…IMFI), 362-382 (ISNF…LLLA), and 393-413 (FLSI…NFGL).

The protein localises to the cell inner membrane. Functionally, required for bacteriophage N4 adsorption. May be a component of the phage receptor. This Escherichia coli O157:H7 protein is Bacteriophage N4 adsorption protein B (nfrB).